We begin with the raw amino-acid sequence, 188 residues long: Segregation and condensation protein B (188 aa).

Belongs to the ScpB family. Homodimer. Homodimerization may be required to stabilize the binding of ScpA to the Smc head domains. Component of a cohesin-like complex composed of ScpA, ScpB and the Smc homodimer, in which ScpA and ScpB bind to the head domain of Smc. The presence of the three proteins is required for the association of the complex with DNA.

The protein resides in the cytoplasm. Its function is as follows. Participates in chromosomal partition during cell division. May act via the formation of a condensin-like complex containing Smc and ScpA that pull DNA away from mid-cell into both cell halves. The protein is Segregation and condensation protein B of Lactococcus lactis subsp. cremoris (strain MG1363).